A 1464-amino-acid chain; its full sequence is ABC transporter G family member 35 (1464 aa).

The segment at 1-26 is disordered; that stretch reads MDAAAEMQKVVSLRRGGGGSSSRGAA. Residues 173–446 form the ABC transporter 1 domain; sequence ANALGILPNK…FELMGFKCPE (274 aa). An ATP-binding site is contributed by 206–213; the sequence is GPPGSGKT. In terms of domain architecture, ABC transmembrane type-2 1 spans 524 to 737; the sequence is ELLKANIDRE…AQNAISVNEF (214 aa). The next 7 helical transmembrane spans lie at 542–562, 575–595, 630–650, 662–682, 686–706, 715–735, and 774–794; these read FVYI…MTVF, GVIF…NGLS, IPMS…VIGF, LLML…GGAA, IVAN…GGFI, WWIW…ISVN, and IGFG…TLAL. The 253-residue stretch at 867–1119 folds into the ABC transporter 2 domain; the sequence is LTFDNIKYSV…ELIKYFEGIK (253 aa). Position 912-919 (912-919) interacts with ATP; that stretch reads GVSGAGKT. The region spanning 1192-1406 is the ABC transmembrane type-2 2 domain; sequence NQCLACLWKM…TLYGLVASQF (215 aa). A run of 7 helical transmembrane segments spans residues 1213–1233, 1243–1263, 1299–1319, 1326–1346, 1356–1376, 1387–1407, and 1436–1456; these read AIRL…FWDL, LFNA…LNSQ, FPYT…MIGF, FFWY…YGMM, VASI…GFII, WYCW…SQFG, and VVAV…GFAI.

The protein belongs to the ABC transporter superfamily. ABCG family. PDR (TC 3.A.1.205) subfamily.

The protein resides in the membrane. Its function is as follows. May be a general defense protein. This chain is ABC transporter G family member 35, found in Oryza sativa subsp. japonica (Rice).